We begin with the raw amino-acid sequence, 205 residues long: Ribonuclease HII (205 aa).

One can recognise an RNase H type-2 domain in the interval 1–205; the sequence is MLVCGVDEAG…RPARLIEAGG (205 aa). 3 residues coordinate a divalent metal cation: aspartate 7, glutamate 8, and aspartate 105.

It belongs to the RNase HII family. The cofactor is Mn(2+). It depends on Mg(2+) as a cofactor.

The protein localises to the cytoplasm. It catalyses the reaction Endonucleolytic cleavage to 5'-phosphomonoester.. Endonuclease that specifically degrades the RNA of RNA-DNA hybrids. The protein is Ribonuclease HII of Cenarchaeum symbiosum (strain A).